Consider the following 429-residue polypeptide: MFKRIALVCALFSGVCFAEGKQLLDKVVAIVNDNVITSSELNAQVELSKKQIIAQNMQMPDESVLRKQVLQHLIDVDLEMQMAKQNGITIENAEIDEAIEKIAASNHLNLSQMRDEITKQGISWQEYRQNIRKEMLISRVQQKAVGKDIIVTNEQVEQYLKTSGRIENSNLTYHLKNIVIPLSEEPTTKQLQRAKIEAENLLNKIKKGEDFSRLAIEESSGEFALEGGDLGERHLAELPEVFAKEVVHMKVGQVAGPIRAGNGFHLIKLVAVGGENQRHVITQTHVRHILLKPDASMVPSEAIKQVNNIYRQIQSGKDFALMAKQYSLDAASAVKGGDLGWVNPGELVPEFEKTMNSLPLHKVSKPVKTQYGWHLIEVIARRQKDDSEAFKKQQVRQFLQQRKFVEAVQNWQQHLRSQAYINIVDKDLA.

Positions 1 to 18 (MFKRIALVCALFSGVCFA) are cleaved as a signal peptide. PpiC domains lie at 170 to 271 (NLTY…KLVA) and 281 to 380 (ITQT…EVIA).

The protein localises to the periplasm. It carries out the reaction [protein]-peptidylproline (omega=180) = [protein]-peptidylproline (omega=0). Chaperone involved in the correct folding and assembly of outer membrane proteins. Recognizes specific patterns of aromatic residues and the orientation of their side chains, which are found more frequently in integral outer membrane proteins. May act in both early periplasmic and late outer membrane-associated steps of protein maturation. The chain is Chaperone SurA from Legionella pneumophila subsp. pneumophila (strain Philadelphia 1 / ATCC 33152 / DSM 7513).